We begin with the raw amino-acid sequence, 242 residues long: Caffeoyl-CoA O-methyltransferase 2 (242 aa).

Lysine 16 is a binding site for substrate. Residues threonine 58, glutamate 80, 82 to 83 (GV), serine 88, aspartate 106, and alanine 135 contribute to the S-adenosyl-L-methionine site. Aspartate 158 is a substrate binding site. Aspartate 158 serves as a coordination point for a divalent metal cation. An S-adenosyl-L-methionine-binding site is contributed by aspartate 160. A divalent metal cation is bound by residues aspartate 184 and asparagine 185. Substrate is bound at residue asparagine 189.

Belongs to the class I-like SAM-binding methyltransferase superfamily. Cation-dependent O-methyltransferase family. CCoAMT subfamily. Mg(2+) serves as cofactor. Mostly expressed in the bottom and middle parts of the stems.

It carries out the reaction (E)-caffeoyl-CoA + S-adenosyl-L-methionine = (E)-feruloyl-CoA + S-adenosyl-L-homocysteine + H(+). The protein operates within aromatic compound metabolism; phenylpropanoid biosynthesis. Its function is as follows. Methylates caffeoyl-CoA to feruloyl-CoA and 5-hydroxyferuloyl-CoA to sinapoyl-CoA. Plays a role in the synthesis of feruloylated polysaccharides. Involved in the reinforcement of the plant cell wall. Also involved in the responding to wounding or pathogen challenge by the increased formation of cell wall-bound ferulic acid polymers. Methylates 5-hydroxyferulolyl-CoA more efficiently than caffeoyl-CoA. The protein is Caffeoyl-CoA O-methyltransferase 2 (CCOAOMT2) of Nicotiana tabacum (Common tobacco).